Here is a 616-residue protein sequence, read N- to C-terminus: Chaperone protein DnaK (616 aa).

Threonine 175 carries the phosphothreonine; by autocatalysis modification. The tract at residues glycine 579–lysine 616 is disordered. Residues glutamate 599–lysine 616 show a composition bias toward basic and acidic residues.

Belongs to the heat shock protein 70 family.

Acts as a chaperone. This is Chaperone protein DnaK from Clostridium botulinum (strain Eklund 17B / Type B).